The primary structure comprises 148 residues: Ribonuclease pancreatic (148 aa).

Positions 1–25 (MGLEKSLMLFPLLVLVLGLVQPSLG) are cleaved as a signal peptide. Substrate is bound by residues K32 and R35. H37 serves as the catalytic Proton acceptor. 4 disulfide bridges follow: C50–C108, C64–C119, C82–C134, and C89–C96. Substrate is bound by residues 65-69 (KPVNT), K90, and R109. H143 functions as the Proton donor in the catalytic mechanism.

This sequence belongs to the pancreatic ribonuclease family. Monomer. Interacts with and forms tight 1:1 complexes with RNH1. Dimerization of two such complexes may occur. Interaction with RNH1 inhibits this protein. Pancreas.

It localises to the secreted. The catalysed reaction is an [RNA] containing cytidine + H2O = an [RNA]-3'-cytidine-3'-phosphate + a 5'-hydroxy-ribonucleotide-3'-[RNA].. The enzyme catalyses an [RNA] containing uridine + H2O = an [RNA]-3'-uridine-3'-phosphate + a 5'-hydroxy-ribonucleotide-3'-[RNA].. Its function is as follows. Endonuclease that catalyzes the cleavage of RNA on the 3' side of pyrimidine nucleotides. Acts on single-stranded and double-stranded RNA. The protein is Ribonuclease pancreatic (RNASE1) of Gerbilliscus gambianus (Gambian gerbil).